We begin with the raw amino-acid sequence, 650 residues long: ATP-binding cassette sub-family G member 3 (650 aa).

Residues methionine 1 to threonine 387 lie on the Cytoplasmic side of the membrane. The 243-residue stretch at leucine 37 to serine 279 folds into the ABC transporter domain. An ABC transmembrane type-2 domain is found at lysine 381–valine 644. Residues valine 388–leucine 408 traverse the membrane as a helical segment. Residues lysine 409–glycine 420 lie on the Extracellular side of the membrane. A helical membrane pass occupies residues leucine 421 to valine 441. Residues isoleucine 442 to glutamate 469 lie on the Cytoplasmic side of the membrane. A helical transmembrane segment spans residues leucine 470–glycine 490. Residues valine 491–phenylalanine 498 are Extracellular-facing. A helical membrane pass occupies residues phenylalanine 499–isoleucine 519. The Cytoplasmic segment spans residues glycine 520 to alanine 527. Residues valine 528–leucine 548 traverse the membrane as a helical segment. The Extracellular portion of the chain corresponds to tyrosine 549–histidine 623. The helical transmembrane segment at leucine 624–valine 644 threads the bilayer. The Cytoplasmic segment spans residues lysine 645–arginine 648.

The protein belongs to the ABC transporter superfamily. ABCG family. Eye pigment precursor importer (TC 3.A.1.204) subfamily. May dimerize with another subunit to form a functional transporter. As to expression, highest levels of expression in thymus and spleen. Detected in lung and small intestine.

It is found in the membrane. The polypeptide is ATP-binding cassette sub-family G member 3 (Abcg3) (Mus musculus (Mouse)).